Reading from the N-terminus, the 312-residue chain is Malate dehydrogenase (312 aa).

Residues 12–17 and aspartate 36 each bind NAD(+); that span reads GAGFTG. 2 residues coordinate substrate: arginine 87 and arginine 93. Residues asparagine 100 and 123-125 contribute to the NAD(+) site; that span reads LTN. Substrate is bound at residue asparagine 125. A Phosphoserine modification is found at serine 149. Residue arginine 156 participates in substrate binding. Residue histidine 180 is the Proton acceptor of the active site.

Belongs to the LDH/MDH superfamily. MDH type 3 family.

It catalyses the reaction (S)-malate + NAD(+) = oxaloacetate + NADH + H(+). Catalyzes the reversible oxidation of malate to oxaloacetate. This is Malate dehydrogenase from Geobacillus thermodenitrificans (strain NG80-2).